A 142-amino-acid polypeptide reads, in one-letter code: Large ribosomal subunit protein uL13 (142 aa).

It belongs to the universal ribosomal protein uL13 family. In terms of assembly, part of the 50S ribosomal subunit.

Functionally, this protein is one of the early assembly proteins of the 50S ribosomal subunit, although it is not seen to bind rRNA by itself. It is important during the early stages of 50S assembly. This chain is Large ribosomal subunit protein uL13, found in Caldicellulosiruptor saccharolyticus (strain ATCC 43494 / DSM 8903 / Tp8T 6331).